Consider the following 298-residue polypeptide: tRNA pseudouridine synthase B (298 aa).

The active-site Nucleophile is the Asp-46.

This sequence belongs to the pseudouridine synthase TruB family. Type 1 subfamily.

The catalysed reaction is uridine(55) in tRNA = pseudouridine(55) in tRNA. Its function is as follows. Responsible for synthesis of pseudouridine from uracil-55 in the psi GC loop of transfer RNAs. The chain is tRNA pseudouridine synthase B from Paracoccus denitrificans (strain Pd 1222).